The primary structure comprises 61 residues: Insect toxin BsIT3 (61 aa).

The region spanning Asp1–Asn61 is the LCN-type CS-alpha/beta domain. Disulfide bonds link Cys10/Cys60, Cys14/Cys35, Cys21/Cys42, and Cys25/Cys44.

Belongs to the long (4 C-C) scorpion toxin superfamily. Sodium channel inhibitor family. Beta subfamily. Expressed by the venom gland.

Its subcellular location is the secreted. Functionally, depressant insect beta-toxins cause a transient contraction paralysis followed by a slow flaccid paralysis. They bind voltage-independently at site-4 of sodium channels (Nav) and shift the voltage of activation toward more negative potentials thereby affecting sodium channel activation and promoting spontaneous and repetitive firing. This toxin is active only on insects. In Hottentotta tamulus sindicus (Scorpion), this protein is Insect toxin BsIT3.